Reading from the N-terminus, the 598-residue chain is Arylsulfatase J (598 aa).

The first 47 residues, 1–47 (MAPRDSAEPLPPLSPQAWAWSGKFLAMGALAGFSVLSLLTYGYLCWG), serve as a signal peptide directing secretion. 3 residues coordinate Ca(2+): Asp-82, Asp-83, and Cys-120. Cys-120 functions as the Nucleophile in the catalytic mechanism. The residue at position 120 (Cys-120) is a 3-oxoalanine (Cys). The N-linked (GlcNAc...) asparagine glycan is linked to Asn-155. Residue Lys-174 participates in substrate binding. The active site involves His-176. Residue His-267 coordinates substrate. 2 N-linked (GlcNAc...) asparagine glycosylation sites follow: Asn-304 and Asn-316. Residues Asp-325 and Asn-326 each contribute to the Ca(2+) site. Lys-343 lines the substrate pocket. Asn-429, Asn-495, Asn-525, and Asn-563 each carry an N-linked (GlcNAc...) asparagine glycan. A disordered region spans residues 532–598 (RYPPKDPRSN…IKCHPSVATG (67 aa)). Residues 559–583 (KKKSNKTKAKKMQKKKSKARMRKQL) are compositionally biased toward basic residues.

It belongs to the sulfatase family. The cofactor is Ca(2+). The conversion to 3-oxoalanine (also known as C-formylglycine, FGly), of a serine or cysteine residue in prokaryotes and of a cysteine residue in eukaryotes, is critical for catalytic activity.

The protein localises to the secreted. The sequence is that of Arylsulfatase J (Arsj) from Mus musculus (Mouse).